A 443-amino-acid chain; its full sequence is COP9 signalosome complex subunit 2 (443 aa).

Positions 1 to 275 are mediates interaction with NIF3L1; it reads MSDMEDDFMC…DESGSPRRTT (275 aa). One can recognise a PCI domain in the interval 254–416; that stretch reads AHTDFFEAFK…QLLELDHQKR (163 aa).

Belongs to the CSN2 family. In terms of assembly, component of the CSN complex, composed of COPS1/GPS1, COPS2, COPS3, COPS4, COPS5, COPS6, COPS7 (COPS7A or COPS7B), COPS8 and COPS9 isoform 1. In the complex, it probably interacts directly with COPS1, COPS4, COPS5, COPS6 and COPS7 (COPS7A or COPS7B). Specifically interacts with the ligand binding domain of the thyroid receptor (TR). Does not require the presence of thyroid hormone for its interaction. Interacts with CUL1 and CUL2. Interacts with IRF8/ICSBP1 and with nuclear receptors NR2F1 and NR0B1. Interacts with NIF3L1. In terms of processing, phosphorylated by CK2 and PKD kinases.

The protein localises to the cytoplasm. It localises to the nucleus. Functionally, essential component of the COP9 signalosome complex (CSN), a complex involved in various cellular and developmental processes. The CSN complex is an essential regulator of the ubiquitin (Ubl) conjugation pathway by mediating the deneddylation of the cullin subunits of SCF-type E3 ligase complexes, leading to decrease the Ubl ligase activity of SCF-type complexes such as SCF, CSA or DDB2. The complex is also involved in phosphorylation of p53/TP53, c-jun/JUN, IkappaBalpha/NFKBIA, ITPK1 and IRF8/ICSBP, possibly via its association with CK2 and PKD kinases. CSN-dependent phosphorylation of TP53 and JUN promotes and protects degradation by the Ubl system, respectively. Involved in early stage of neuronal differentiation via its interaction with NIF3L1. The sequence is that of COP9 signalosome complex subunit 2 (COPS2) from Homo sapiens (Human).